A 474-amino-acid polypeptide reads, in one-letter code: MSRNQSREARPNREVAQTVSERVYVETQGCQMNDYDAERLVDVLVSQAGARRVDRPEEADLLLLNTCSVREKAQEKVFSQLGRWRRYKQDNPTVLIGVGGCVASQEGAEILRRAPFVDLVFGPQTLHRLPQMLARRRSGASAQVDVDFPEIEKFDHLPQPRAEGPTAYVSVMEGCSKYCSFCVVPYTRGDEISRPVADVLAEVRSLAEQGVREVNLLGQNVNAYAGALDDGERADLGLLIEAVARIPGIDRIRFTTSHPAEFHSGLIDAYRDVPELADFLHLPVQSGSDLILKLMKRGHDIAAYEALIDQIRAVRPGLVLATDLIVGFPGETEAEFEETLAMVDRVGFDGGAFSFVYSPRPGTPAAELHDGVPEADKRAWLQRLQARLHEQQSAAARALLGTRQSVLIDGPSRRDPRELSGRTSGNRVVNFPGDPSWIGRFAEVEITDARTHSLRGRVVSVEGQAMHAAVGAGG.

Residues 21 to 138 (ERVYVETQGC…LPQMLARRRS (118 aa)) form the MTTase N-terminal domain. 6 residues coordinate [4Fe-4S] cluster: Cys-30, Cys-67, Cys-101, Cys-175, Cys-179, and Cys-182. The 235-residue stretch at 161–395 (RAEGPTAYVS…ARLHEQQSAA (235 aa)) folds into the Radical SAM core domain. In terms of domain architecture, TRAM spans 397–460 (RALLGTRQSV…THSLRGRVVS (64 aa)).

It belongs to the methylthiotransferase family. MiaB subfamily. In terms of assembly, monomer. The cofactor is [4Fe-4S] cluster.

The protein localises to the cytoplasm. The enzyme catalyses N(6)-dimethylallyladenosine(37) in tRNA + (sulfur carrier)-SH + AH2 + 2 S-adenosyl-L-methionine = 2-methylsulfanyl-N(6)-dimethylallyladenosine(37) in tRNA + (sulfur carrier)-H + 5'-deoxyadenosine + L-methionine + A + S-adenosyl-L-homocysteine + 2 H(+). Catalyzes the methylthiolation of N6-(dimethylallyl)adenosine (i(6)A), leading to the formation of 2-methylthio-N6-(dimethylallyl)adenosine (ms(2)i(6)A) at position 37 in tRNAs that read codons beginning with uridine. This is tRNA-2-methylthio-N(6)-dimethylallyladenosine synthase from Halorhodospira halophila (strain DSM 244 / SL1) (Ectothiorhodospira halophila (strain DSM 244 / SL1)).